A 354-amino-acid chain; its full sequence is UPF0283 membrane protein plu2581 (354 aa).

The next 3 membrane-spanning stretches (helical) occupy residues 71-91, 101-121, and 214-234; these read MVYG…VQWI, SALG…GSLV, and ESAL…FIAW.

The protein belongs to the UPF0283 family.

It localises to the cell inner membrane. This chain is UPF0283 membrane protein plu2581, found in Photorhabdus laumondii subsp. laumondii (strain DSM 15139 / CIP 105565 / TT01) (Photorhabdus luminescens subsp. laumondii).